Reading from the N-terminus, the 186-residue chain is MVEELPSVFLVGPMGAGKTTIGRLLAKQLGRTFVDSDWYVESQTGADIAWIFDKEGEAGFRERETRAIDELTQQPQIVLATGGGAVMAAENREFLKQRGIVIYLNAPVDVQMARTAKDKSRPLLQQPNPRKILQGLYSARDPLYRQVAHIIMPTGHTYPRHMVNQLLQQLNSFCASTSVVSEPEKD.

Position 15 to 20 (Gly15 to Thr20) interacts with ATP. Thr19 contributes to the Mg(2+) binding site. Positions 37, 61, and 83 each coordinate substrate. Position 121 (Arg121) interacts with ATP. Residue Arg140 coordinates substrate.

Belongs to the shikimate kinase family. In terms of assembly, monomer. Requires Mg(2+) as cofactor.

It localises to the cytoplasm. The enzyme catalyses shikimate + ATP = 3-phosphoshikimate + ADP + H(+). It participates in metabolic intermediate biosynthesis; chorismate biosynthesis; chorismate from D-erythrose 4-phosphate and phosphoenolpyruvate: step 5/7. Functionally, catalyzes the specific phosphorylation of the 3-hydroxyl group of shikimic acid using ATP as a cosubstrate. The polypeptide is Shikimate kinase (Psychrobacter arcticus (strain DSM 17307 / VKM B-2377 / 273-4)).